The primary structure comprises 661 residues: UvrABC system protein C (661 aa).

The 80-residue stretch at 25-104 (AEPGCYLMRD…IKNHQPHFNV (80 aa)) folds into the GIY-YIG domain. In terms of domain architecture, UVR spans 214–249 (DELQHLLQEQMERYAERMDYESAARVRDQLQGLDQL). Over residues 636 to 652 (FFHPSDEGTDADARAAL) the composition is skewed to basic and acidic residues. The interval 636–661 (FFHPSDEGTDADARAALEEQPQELSA) is disordered.

The protein belongs to the UvrC family. Interacts with UvrB in an incision complex.

It is found in the cytoplasm. Functionally, the UvrABC repair system catalyzes the recognition and processing of DNA lesions. UvrC both incises the 5' and 3' sides of the lesion. The N-terminal half is responsible for the 3' incision and the C-terminal half is responsible for the 5' incision. This is UvrABC system protein C from Synechococcus sp. (strain CC9605).